The primary structure comprises 148 residues: Snaclec B2 (148 aa).

An N-terminal signal peptide occupies residues 1 to 24 (MGRLISVSFGLLVVFLSLSGTGAA). Cystine bridges form between C27–C38, C55–C144, and C121–C136. Residues 34–145 (YDQHCYKVFD…CRLLGHFVCK (112 aa)) enclose the C-type lectin domain.

The protein belongs to the snaclec family. Heterodimer; disulfide-linked. Expressed by the venom gland.

The protein localises to the secreted. Its function is as follows. Interferes with one step of hemostasis (modulation of platelet aggregation, or coagulation cascade, for example). The sequence is that of Snaclec B2 from Macrovipera lebetinus (Levantine viper).